A 196-amino-acid polypeptide reads, in one-letter code: MAIDVKAIEEHIRGILIALGDNPEREGLKNTPKRVAKMYEEVFKGMCYSNDEIAEMFNVTFEDDLCINDNENDMVFMKEIEIFSHCEHHLALMYNMKVAIAYIPKKKIIGLSKIARIADMVGRRLQLQERIGSDIAEILQKITDSEDVAVIIEGEHGCMTTRGIKKPGTKTITTTLRGKFNTDPIVSNKLMMLYTK.

3 residues coordinate Zn(2+): cysteine 86, histidine 89, and cysteine 158.

The protein belongs to the GTP cyclohydrolase I family. As to quaternary structure, toroid-shaped homodecamer, composed of two pentamers of five dimers.

The catalysed reaction is GTP + H2O = 7,8-dihydroneopterin 3'-triphosphate + formate + H(+). It functions in the pathway cofactor biosynthesis; 7,8-dihydroneopterin triphosphate biosynthesis; 7,8-dihydroneopterin triphosphate from GTP: step 1/1. The polypeptide is GTP cyclohydrolase 1 (Clostridium botulinum (strain ATCC 19397 / Type A)).